A 230-amino-acid chain; its full sequence is Probable septum site-determining protein MinC (230 aa).

The protein belongs to the MinC family. Interacts with MinD and FtsZ.

In terms of biological role, cell division inhibitor that blocks the formation of polar Z ring septums. Rapidly oscillates between the poles of the cell to destabilize FtsZ filaments that have formed before they mature into polar Z rings. Prevents FtsZ polymerization. This chain is Probable septum site-determining protein MinC, found in Erwinia tasmaniensis (strain DSM 17950 / CFBP 7177 / CIP 109463 / NCPPB 4357 / Et1/99).